The following is a 114-amino-acid chain: uncharacterized protein (114 aa).

The disordered stretch occupies residues 1–37 (MLKKILSLFKKEEPKTEEKPTEVEEKKEEREEKEEKK). The segment covering 9–37 (FKKEEPKTEEKPTEVEEKKEEREEKEEKK) has biased composition (basic and acidic residues).

This is an uncharacterized protein from Aquifex aeolicus (strain VF5).